A 486-amino-acid polypeptide reads, in one-letter code: N-succinylglutamate 5-semialdehyde dehydrogenase (486 aa).

Gly220–Gly225 lines the NAD(+) pocket. Residues Glu243 and Cys277 contribute to the active site.

This sequence belongs to the aldehyde dehydrogenase family. AstD subfamily.

It catalyses the reaction N-succinyl-L-glutamate 5-semialdehyde + NAD(+) + H2O = N-succinyl-L-glutamate + NADH + 2 H(+). Its pathway is amino-acid degradation; L-arginine degradation via AST pathway; L-glutamate and succinate from L-arginine: step 4/5. Functionally, catalyzes the NAD-dependent reduction of succinylglutamate semialdehyde into succinylglutamate. In Shewanella baltica (strain OS223), this protein is N-succinylglutamate 5-semialdehyde dehydrogenase.